The following is a 414-amino-acid chain: Putative polyketide beta-ketoacyl synthase 2 (414 aa).

One can recognise a Ketosynthase family 3 (KS3) domain in the interval 4-407; the sequence is PRRAVVTGLG…GNNSALVLRR (404 aa).

This sequence belongs to the thiolase-like superfamily. Beta-ketoacyl-ACP synthases family.

Involved in developmentally regulated synthesis of a compound biosynthetically related to polyketide antibiotics which is essential for spore color in Streptomyces halstedii. This Streptomyces halstedii protein is Putative polyketide beta-ketoacyl synthase 2 (sch2).